Consider the following 527-residue polypeptide: NAD(P)H-quinone oxidoreductase chain 4 1 (527 aa).

Transmembrane regions (helical) follow at residues 6 to 26, 36 to 56, 91 to 111, 113 to 133, 136 to 156, 169 to 189, 212 to 232, 243 to 263, 275 to 295, 306 to 326, 331 to 351, 387 to 407, and 417 to 437; these read FPWLTAIILFPIVAALLVPII, WFALTVGLIDFALIIYAFYSS, LIILTGFITTLAILAAWPVTF, PKLFYFLMLLMYGGQIAVFAV, LLLFFLVWELELVPVYLILSI, FILYTAGGSLFILVAALTMAF, LFLYAGFLIAYGVKLPIFPLH, TAPAHMLLAGILLKMGGYALL, AVFAPVLVILGVVNIIYAALT, IAYSSISHMGFVLIGMASFTD, GAMLQMISHGLIGASLFFMVG, LALPGMSGFVAELMVFIGFAT, and VIIVFLAAIGVILTPIYLLSM.

The protein belongs to the complex I subunit 4 family.

Its subcellular location is the cellular thylakoid membrane. The enzyme catalyses a plastoquinone + NADH + (n+1) H(+)(in) = a plastoquinol + NAD(+) + n H(+)(out). It carries out the reaction a plastoquinone + NADPH + (n+1) H(+)(in) = a plastoquinol + NADP(+) + n H(+)(out). NDH-1 shuttles electrons from NAD(P)H, via FMN and iron-sulfur (Fe-S) centers, to quinones in the respiratory chain. The immediate electron acceptor for the enzyme in this species is believed to be plastoquinone. Couples the redox reaction to proton translocation (for every two electrons transferred, four hydrogen ions are translocated across the cytoplasmic membrane), and thus conserves the redox energy in a proton gradient. The polypeptide is NAD(P)H-quinone oxidoreductase chain 4 1 (Microcystis aeruginosa (strain NIES-843 / IAM M-2473)).